The following is a 309-amino-acid chain: UPF0252 protein PH0672 (309 aa).

The next 2 helical transmembrane spans lie at 5–25 and 106–126; these read SVII…NESI and AVLT…LMIF.

It belongs to the UPF0252 family.

It localises to the cell membrane. The sequence is that of UPF0252 protein PH0672 from Pyrococcus horikoshii (strain ATCC 700860 / DSM 12428 / JCM 9974 / NBRC 100139 / OT-3).